The following is a 389-amino-acid chain: Succinate--CoA ligase [ADP-forming] subunit beta (389 aa).

Residues 9–246 (KEILRRHNAN…ITEEDPYEVK (238 aa)) form the ATP-grasp domain. ATP-binding positions include Lys-48, 55–57 (GRG), Glu-101, Leu-104, and Glu-109. The Mg(2+) site is built by Asn-201 and Asp-215. Substrate is bound by residues Asn-266 and 323-325 (GIV).

The protein belongs to the succinate/malate CoA ligase beta subunit family. In terms of assembly, heterotetramer of two alpha and two beta subunits. The cofactor is Mg(2+).

The enzyme catalyses succinate + ATP + CoA = succinyl-CoA + ADP + phosphate. It carries out the reaction GTP + succinate + CoA = succinyl-CoA + GDP + phosphate. The protein operates within carbohydrate metabolism; tricarboxylic acid cycle; succinate from succinyl-CoA (ligase route): step 1/1. In terms of biological role, succinyl-CoA synthetase functions in the citric acid cycle (TCA), coupling the hydrolysis of succinyl-CoA to the synthesis of either ATP or GTP and thus represents the only step of substrate-level phosphorylation in the TCA. The beta subunit provides nucleotide specificity of the enzyme and binds the substrate succinate, while the binding sites for coenzyme A and phosphate are found in the alpha subunit. This is Succinate--CoA ligase [ADP-forming] subunit beta from Leptospira biflexa serovar Patoc (strain Patoc 1 / Ames).